The sequence spans 681 residues: Peroxisomal acyl-coenzyme A oxidase 2 (681 aa).

Phosphoserine is present on residues Ser3 and Ser9. Position 13 is a phosphothreonine (Thr13). An N6-succinyllysine mark is found at Lys66, Lys137, Lys453, and Lys561. The short motif at 679-681 (SKL) is the Microbody targeting signal element.

It belongs to the acyl-CoA oxidase family. In terms of assembly, homodimer. It depends on FAD as a cofactor. As to expression, present in all tissues tested: heart, brain, placenta, lung, liver, skeletal muscle, kidney and pancreas. Most abundant in heart, liver and kidney.

It localises to the peroxisome. It carries out the reaction (25R)-3alpha,7alpha,12alpha-trihydroxy-5beta-cholestan-26-oyl-CoA + A + H2O = (24R,25R)-3alpha,7alpha,12alpha,24-tetrahydroxy-5beta-cholestan-26-oyl-CoA + AH2. It catalyses the reaction (25S)-3alpha,7alpha,12alpha-trihydroxy-5beta-cholestan-26-oyl-CoA + O2 = (24E)-3alpha,7alpha,12alpha-trihydroxy-5beta-cholest-24-en-26-oyl-CoA + H2O2. In terms of biological role, oxidizes the CoA esters of the bile acid intermediates di- and tri-hydroxycholestanoic acids. Capable of oxidizing short as well as long chain 2-methyl branched fatty acids. This Homo sapiens (Human) protein is Peroxisomal acyl-coenzyme A oxidase 2.